Reading from the N-terminus, the 135-residue chain is ARGOS-like protein (135 aa).

Residues 71 to 122 (FSLESMVVLVGLTASLLILPLILPPLPPPPFMLLLIPIGIMVLLMVLAFMPS) are organ Size Related (OSR) domain. Transmembrane regions (helical) follow at residues 76 to 96 (MVVL…LPPL) and 100 to 120 (PFML…LAFM).

Belongs to the plant organ size related (OSR) protein family. In terms of tissue distribution, expressed in cotyledons, roots, flowers, siliques and leaves.

It is found in the membrane. Its subcellular location is the nucleus. It localises to the cytoplasm. The protein resides in the endoplasmic reticulum. In terms of biological role, promotes cell expansion-dependent organ growth, probably via a brassinosteroids signaling pathway. Acts downstream of BRI1. This is ARGOS-like protein (ARL) from Arabidopsis thaliana (Mouse-ear cress).